The sequence spans 182 residues: Translation initiation factor IF-3, chloroplastic (182 aa).

Belongs to the IF-3 family. In terms of assembly, monomer.

The protein localises to the plastid. The protein resides in the chloroplast. Its function is as follows. IF-3 binds to the 30S ribosomal subunit and shifts the equilibrium between 70S ribosomes and their 50S and 30S subunits in favor of the free subunits, thus enhancing the availability of 30S subunits on which protein synthesis initiation begins. The protein is Translation initiation factor IF-3, chloroplastic of Porphyra purpurea (Red seaweed).